Here is a 317-residue protein sequence, read N- to C-terminus: 17-beta-hydroxysteroid dehydrogenase type 6 (317 aa).

The N-terminal stretch at 1–17 is a signal peptide; that stretch reads MWFYLVTLVGLYYLLRW. 33–57 contacts NAD(+); sequence FITGCDSGFGNLLARQLDRRGMRVL. N-linked (GlcNAc...) asparagine glycosylation occurs at asparagine 161. Serine 164 contributes to the substrate binding site. Tyrosine 176 acts as the Proton acceptor in catalysis.

It belongs to the short-chain dehydrogenases/reductases (SDR) family. As to expression, detected in prostate, liver and kidney.

The protein localises to the microsome membrane. The protein resides in the endoplasmic reticulum membrane. It carries out the reaction all-trans-retinol--[retinol-binding protein] + NAD(+) = all-trans-retinal--[retinol-binding protein] + NADH + H(+). The catalysed reaction is all-trans-retinol + NAD(+) = all-trans-retinal + NADH + H(+). The enzyme catalyses androsterone + NAD(+) = 5alpha-androstan-3,17-dione + NADH + H(+). It catalyses the reaction testosterone + NAD(+) = androst-4-ene-3,17-dione + NADH + H(+). It carries out the reaction 5alpha-androstane-3alpha,17beta-diol + NAD(+) = 17beta-hydroxy-5alpha-androstan-3-one + NADH + H(+). The catalysed reaction is 17beta-estradiol + NAD(+) = estrone + NADH + H(+). The enzyme catalyses 17beta-estradiol + NADP(+) = estrone + NADPH + H(+). It catalyses the reaction 3alpha-hydroxy-5alpha-pregnan-20-one + NAD(+) = 5alpha-pregnane-3,20-dione + NADH + H(+). It carries out the reaction 5alpha-androstane-3beta,17beta-diol + NAD(+) = 17beta-hydroxy-5alpha-androstan-3-one + NADH + H(+). The catalysed reaction is 3beta-hydroxy-5alpha-androstan-17-one + NAD(+) = 5alpha-androstan-3,17-dione + NADH + H(+). Its activity is regulated as follows. Competitively inhibited by 9-cis-retinoic acid and 13-cis-retinoic acid. Functionally, NAD-dependent oxidoreductase with broad substrate specificity that shows both oxidative and reductive activity (in vitro). Has retinol dehydrogenase activity towards all-trans-retinol (in vitro). Has 17-beta-hydroxysteroid dehydrogenase activity towards various steroids (in vitro). Converts 5-alpha-androstan-3-alpha,17-beta-diol to androsterone and estradiol to estrone (in vitro). Has 3-alpha-hydroxysteroid dehydrogenase activity towards androsterone (in vitro). The sequence is that of 17-beta-hydroxysteroid dehydrogenase type 6 (Hsd17b6) from Rattus norvegicus (Rat).